The primary structure comprises 233 residues: Forkhead box protein L3 (233 aa).

The segment at residues 32 to 130 (RPAYSYIALI…ENGNYRRRRR (99 aa)) is a DNA-binding region (fork-head). Positions 125–134 (YRRRRRRRGP) are enriched in basic residues. Residues 125-198 (YRRRRRRRGP…PRDLKFSIDY (74 aa)) are disordered. Pro residues predominate over residues 175–184 (REPPASPAPP). Basic and acidic residues predominate over residues 185–194 (GKEHPRDLKF).

Its subcellular location is the nucleus. In terms of biological role, probable transcriptional regulator. In Homo sapiens (Human), this protein is Forkhead box protein L3.